The primary structure comprises 364 residues: Pre-small/secreted glycoprotein (364 aa).

The N-terminal stretch at 1–32 (MGVTGILQLPRDRFKRTSFFLWVIILFQRTFS) is a signal peptide. N-linked (GlcNAc...) asparagine; by host glycosylation is present at N40. 2 disulfides stabilise this stretch: C108–C135 and C121–C147. 5 N-linked (GlcNAc...) asparagine; by host glycosylation sites follow: N204, N228, N238, N257, and N268.

Belongs to the filoviruses glycoprotein family. In terms of assembly, homodimer; disulfide-linked. The homodimers are linked by two disulfide bonds in a parallel orientation. As to quaternary structure, monomer. This precursor is processed into mature sGP and delta-peptide by host furin or furin-like proteases. The cleavage site corresponds to the furin optimal cleavage sequence [KR]-X-[KR]-R. In terms of processing, N-glycosylated. Post-translationally, O-glycosylated.

The protein localises to the secreted. In terms of biological role, seems to possess an anti-inflammatory activity as it can reverse the barrier-decreasing effects of TNF alpha. Might therefore contribute to the lack of inflammatory reaction seen during infection in spite the of extensive necrosis and massive virus production. Does not seem to be involved in activation of primary macrophages. Does not seem to interact specifically with neutrophils. Functionally, viroporin that permeabilizes mammalian cell plasma membranes. It acts by altering permeation of ionic compounds and small molecules. This activity may lead to viral enterotoxic activity. The sequence is that of Pre-small/secreted glycoprotein (GP) from Zaire ebolavirus (strain Eckron-76) (ZEBOV).